Here is a 275-residue protein sequence, read N- to C-terminus: Cell division protein FtsQ (275 aa).

A disordered region spans residues 1 to 20 (MRDLHKKKPRPVTQNRLKKP). The Cytoplasmic segment spans residues 1–38 (MRDLHKKKPRPVTQNRLKKPPKTCKPINYRGILKKTAK). A helical transmembrane segment spans residues 39-61 (VVGGAALISAVGCAGYGIYRIIA). Residues 62-275 (GTTFFKLERI…YSDKIIVKKV (214 aa)) are Periplasmic-facing. In terms of domain architecture, POTRA spans 66–134 (FKLERIEVSE…NTLSMQIAER (69 aa)).

Belongs to the FtsQ/DivIB family. FtsQ subfamily.

The protein localises to the cell inner membrane. Essential cell division protein. The chain is Cell division protein FtsQ from Geotalea daltonii (strain DSM 22248 / JCM 15807 / FRC-32) (Geobacter daltonii).